Consider the following 977-residue polypeptide: Receptor-like protein kinase 7 (977 aa).

The signal sequence occupies residues 1–28 (MAPSLRNFNFFHRFSTFLVFSLFSVVSS). At 29–608 (DDLQVLLKLK…NPSRSHGDTR (580 aa)) the chain is on the extracellular side. LRR repeat units follow at residues 71 to 95 (RGNVTEIDLSRRGLSGNFPFDSVCE), 96 to 119 (IQSLEKLSLGFNSLSGIIPSDLKN), and 121 to 145 (TSLKYLDLGNNLFSGAFPEFSSLNQ). Residues asparagine 73 and asparagine 119 are each glycosylated (N-linked (GlcNAc...) asparagine). Asparagine 152 and asparagine 167 each carry an N-linked (GlcNAc...) asparagine glycan. LRR repeat units follow at residues 168–194 (ATSLVVLSLGDNPFDATADFPVEVVSL), 195–218 (KKLSWLYLSNCSIAGKIPPAIGDL), 219–242 (TELRNLEISDSGLTGEIPSEISKL), 244–265 (NLWQLELYNNSLTGKLPTGFGN), 267–289 (KNLTYLDASTNLLQGDLSELRSL), 290–312 (TNLVSLQMFENEFSGEIPLEFGE), 313–337 (FKDLVNLSLYTNKLTGSLPQGLGSL), 339–361 (DFDFIDASENLLTGPIPPDMCKN), 362–385 (GKMKALLLLQNNLTGSIPESYANC), 386–409 (LTLQRFRVSENNLNGTVPAGLWGL), 411–433 (KLEIIDIEMNNFEGPITADIKNG), 434–457 (KMLGALYLGFNKLSDELPEEIGDT), 458–481 (ESLTKVELNNNRFTGKIPSSIGKL), 482–505 (KGLSSLKMQSNGFSGEIPDSIGSC), 507–529 (MLSDVNMAQNSISGEIPHTLGSL), 530–553 (PTLNALNLSDNKLSGRIPESLSSL), and 555–578 (LSLLDLSNNRLSGRIPLSLSSYNG). A glycan (N-linked (GlcNAc...) asparagine) is linked at asparagine 204. Residues asparagine 252 and asparagine 268 are each glycosylated (N-linked (GlcNAc...) asparagine). An N-linked (GlcNAc...) asparagine glycan is attached at asparagine 318. N-linked (GlcNAc...) asparagine glycosylation is found at asparagine 373 and asparagine 399. N-linked (GlcNAc...) asparagine glycosylation is found at asparagine 536 and asparagine 577. A helical transmembrane segment spans residues 609–629 (VFVLCIVFGLLILLASLVFFL). The Cytoplasmic segment spans residues 630 to 977 (YLKKTEKKEG…ESDVKVKEIS (348 aa)). In terms of domain architecture, Protein kinase spans 666–959 (IKEENLIGRG…QMIEDAEPCR (294 aa)). Residues 672–680 (IGRGGCGDV) and lysine 694 contribute to the ATP site. The active-site Proton acceptor is the aspartate 805.

It belongs to the protein kinase superfamily. Ser/Thr protein kinase family. Interacts with PIP1. As to expression, expressed in roots, stems and dry seeds. Expressed at junctions between organs, such as the insertion zones of stamens, petals and sepals, the transition zones of floral stem and pedicel, pedicel and silique, and floral stem and cauline leaves.

The protein resides in the membrane. It carries out the reaction L-seryl-[protein] + ATP = O-phospho-L-seryl-[protein] + ADP + H(+). The enzyme catalyses L-threonyl-[protein] + ATP = O-phospho-L-threonyl-[protein] + ADP + H(+). Its function is as follows. Plays a role in pattern-triggered immunity (PTI) signaling induced by pathogen-associated molecular patterns (PAMPs). Acts as a receptor for PIP1 defense peptide. PIP1 is an endogenous secreted peptide that acts as elicitor of immune response and positive regulator of defense response. Involved in the control of seed germination speed, in tolerance to oxidative stress and in maintaining seed longevity. In Arabidopsis thaliana (Mouse-ear cress), this protein is Receptor-like protein kinase 7.